Consider the following 433-residue polypeptide: MKFVDSADLIIKAGKGGDGAVSFLHALFVPNGGPNGGDGGDGGSVYFQGDEGKHSLLDLKLQKKYSAQDGFKGDIKNMHGAKGEDKIIKVPVGTILYDKKTNNILADINENNKLVLIAKGGKGGKGNARFANSRNKAPTIFEAGELGQEFEIRAELKVLADVGFVGLPNAGKSTLLRAISNSKPVVADYPFTTITPQLGVARTKNNDTFIVADLPGLIQGASLGKGLGHQFLKHIERCLVICHIIDASGNFGSEDIIKNYELIRNELKTYNLNLEKRAEIIVLNKMDLDEAQLNLLDEKIINYFKNKKVIQISGLKKENIDQLLFMIYEELKVAKKQSLWELDKNNNQDEMVIYKFEEQKEDIQAYNKGNNRWEIAGETIFKIYQKFPIWTEDNLLMFNEKLKETGVYETLVKKGIKKGDFVKVFDYELEWTD.

The 159-residue stretch at 1 to 159 (MKFVDSADLI…FEIRAELKVL (159 aa)) folds into the Obg domain. Residues 160-332 (ADVGFVGLPN…LLFMIYEELK (173 aa)) enclose the OBG-type G domain. GTP is bound by residues 166–173 (GLPNAGKS), 191–195 (FTTIT), 213–216 (DLPG), 284–287 (NKMD), and 313–315 (SGL). Mg(2+) contacts are provided by Ser-173 and Thr-193. Residues 355–433 (KFEEQKEDIQ…VFDYELEWTD (79 aa)) form the OCT domain.

It belongs to the TRAFAC class OBG-HflX-like GTPase superfamily. OBG GTPase family. In terms of assembly, monomer. Requires Mg(2+) as cofactor.

The protein resides in the cytoplasm. Functionally, an essential GTPase which binds GTP, GDP and possibly (p)ppGpp with moderate affinity, with high nucleotide exchange rates and a fairly low GTP hydrolysis rate. Plays a role in control of the cell cycle, stress response, ribosome biogenesis and in those bacteria that undergo differentiation, in morphogenesis control. The polypeptide is GTPase Obg (Mycoplasma mycoides subsp. mycoides SC (strain CCUG 32753 / NCTC 10114 / PG1)).